The sequence spans 150 residues: Deoxyuridine 5'-triphosphate nucleotidohydrolase (150 aa).

Substrate-binding positions include Arg-69–Gly-71, Asn-82, Thr-86–Asp-88, and Lys-96.

Belongs to the dUTPase family. Requires Mg(2+) as cofactor.

It catalyses the reaction dUTP + H2O = dUMP + diphosphate + H(+). Its pathway is pyrimidine metabolism; dUMP biosynthesis; dUMP from dCTP (dUTP route): step 2/2. Functionally, this enzyme is involved in nucleotide metabolism: it produces dUMP, the immediate precursor of thymidine nucleotides and it decreases the intracellular concentration of dUTP so that uracil cannot be incorporated into DNA. The sequence is that of Deoxyuridine 5'-triphosphate nucleotidohydrolase from Aquifex aeolicus (strain VF5).